We begin with the raw amino-acid sequence, 438 residues long: Ribosome biogenesis protein NOP53 (438 aa).

Disordered stretches follow at residues 1–23 and 247–346; these read MVAG…WRKG and HPKY…RKKE. Over residues 12–21 the composition is skewed to basic residues; it reads GSRHNKKYWR. Composition is skewed to basic and acidic residues over residues 265 to 288, 297 to 318, and 325 to 346; these read KSMK…MTKE, QKLD…DSHN, and LHKE…RKKE.

It belongs to the NOP53 family.

The protein localises to the nucleus. It localises to the nucleolus. Its subcellular location is the nucleoplasm. Functionally, may play a role in ribosome biogenesis, being required for integration of the 5S RNP into the ribosomal large subunit. The chain is Ribosome biogenesis protein NOP53 from Caenorhabditis elegans.